Reading from the N-terminus, the 244-residue chain is Probable transcriptional regulatory protein Aasi_0624 (244 aa).

The protein belongs to the TACO1 family.

It is found in the cytoplasm. The chain is Probable transcriptional regulatory protein Aasi_0624 from Amoebophilus asiaticus (strain 5a2).